The primary structure comprises 384 residues: Calreticulin-3 (384 aa).

Positions 1–19 (MAAARVPLWAICVRRVALA) are cleaved as a signal peptide. The segment at 20–197 (TVYFQEEFLD…GQSIESGSIE (178 aa)) is N-domain. Residue Asn42 is glycosylated (N-linked (GlcNAc...) asparagine). The cysteines at positions 105 and 137 are disulfide-linked. Tyr109, Lys111, Tyr128, and Asp135 together coordinate an alpha-D-glucoside. 7 tandem repeats follow at residues 191-202 (IESGSIEYDWQL), 209-220 (EKASAEAEGWDQ), 222-231 (AKDKSQDWEK), 235-246 (DASASKPSDWKG), 250-260 (GDWQAAMLQKP), 264-272 (DGLKPEGID), and 274-284 (DVWLHQKMKNS). The interval 191 to 246 (IESGSIEYDWQLTSLKKMEKASAEAEGWDQAAKDKSQDWEKHFLDASASKPSDWKG) is 4 X approximate repeats. The interval 198–294 (YDWQLTSLKK…YLTEYDLSEF (97 aa)) is P-domain. The tract at residues 250–284 (GDWQAAMLQKPPYQDGLKPEGIDKDVWLHQKMKNS) is 3 X approximate repeats. The C-domain stretch occupies residues 295 to 384 (ENIGAVGLEL…FKGFHRRNEF (90 aa)). Glu303 provides a ligand contact to an alpha-D-glucoside. Residues 381 to 384 (RNEF) carry the Prevents secretion from ER motif.

The protein belongs to the calreticulin family. As to quaternary structure, component of an EIF2 complex at least composed of CELF1/CUGBP1, CALR, CALR3, EIF2S1, EIF2S2, HSP90B1 and HSPA5.

Its subcellular location is the endoplasmic reticulum lumen. In terms of biological role, during spermatogenesis, may act as a lectin-independent chaperone for specific client proteins such as ADAM3. CALR3 capacity for calcium-binding may be absent or much lower than that of CALR. Required for sperm fertility. The protein is Calreticulin-3 (CALR3) of Bos taurus (Bovine).